Here is a 3415-residue protein sequence, read N- to C-terminus: MMTTSKGKGGGPPRRKLKVTANKSRPATSPMPKGFVLSRMLGILWHAVTGTARPPVLKMFWKTVPLRQAEAVLKKIKRVIGNLMQSLHMRGRRRSGVDWTWIFLTMALMTMAMATTIHRDREGYMVMRASGRDAASQVRVQNGTCVILATDMGEWCEDSITYSCVTIDQEEEPVDVDCFCRGVDRVKLEYGRCGRQAGSRGKRSVVIPTHAQKDMVGRGHAWLKGDNIRDHVTRVEGWMWKNKLLTAAIVALAWLMVDSWMARVTVILLALSLGPVYATRCTHLENRDFVTGTQGTTRVSLVLELGGCVTITAEGKPSIDVWLEDIFQESPAETREYCLHAKLTNTKVEARCPTTGPATLPEEHQANMVCKRDQSDRGWGNHCGFFGKGSIVACAKFECEEAKKAVGHVYDSTKITYVVKVEPHTGDYLAANETNSNRKSAQFTVASEKVILRLGDYGDVSLTCKVASGIDVAQTVVMSLDSSKDHLPSAWQVHRDWFEDLALPWKHKDNQDWNSVEKLVEFGPPHAVKMDVFNLGDQTAVLLKSLAGVPLASVEGQKYHLKSGHVTCDVGLEKLKLKGTTYSMCDKAKFKWKRVPVDSGHDTVVMEVSYTGSDKPCRIPVRAVAHGVPAVNVAMLITPNPTIETNGGGFIEMQLPPGDNIIYVGDLSQQWFQKGSTIGRMFEKTRRGLERLSVVGEHAWDFGSVGGVLSSVGKAIHTVLGGAFNTLFGGVGFIPKMLLGVALVWLGLNARNPTMSMTFLAVGALTLMMTMGVGADYGCAIDPERMEIRCGEGLVVWKEVSEWYDGYAYHPESPDTLAQALREAFERGVCGVVPQNRLEMAMWRSTAPELNLVLSEGEANLTIVVDKTDPADYRGGTPMVLKKTGKESKVSWKSWGKSILWSVPDSPRRMMMGVDGVGECPLYRRATGVFTVAEFGVGLRTKVFLDLRGEASKECDTGVMGAAVKNGKAIHTDQSMWMSSFRNDTGTYIHELILTDLRNCTWPASHTIDNDGVLDSHLFLPVTLAGPRSKYNRIPGYSEQVRGPWDQTPLRVVRDHCPGTSVRIDSHCDKRGASVRSTTESGKIIPEWCCRACELPPVTFRSGTDCWYAMEIRPVHSQGGLVRSMVVADNGALLSEGGVPGLVAVFVLMEFLLRRRPGSVTSILWGGILMLGLLVTGLVRVEEIVRYVIAVGVTFHLELGPETMVLVMLQAVFNMRTCYLMGFLVKRVITTREVVTVYFLLLVLEMGIPEMNFGHLWEWADALAMGLLIIKASAMEDRRGLGFLLAGLMTQRHLVAVHHGLMVFLTVALAVVGRNIYNGQKERKGLCFTVPLASLLGGSGSGLRMLALWECLGGRGRRSLSEPLTVVGVMLAMASGLLRHSSQEALLALSAGSFLILMLILGTRRLQLTAEWAGVVEWNPELVNEGGEVSLKVRQDAMGNLHLTEVEREERRLALWLVFGLLASAYHWSGILVTMGAWTVYELFSSTRRTDLVFSGQLPDQGEKRSFDIKEGVYRIYAPGLFWGYRQIGVGYGTKGVLHTMWHVTRGAALSVEGATSGPYWADVREDVVCYGGAWGLDKKWGGEVVQVHAFPPDSGHKIHQCQPGKLNLEGGRVLGAIPIDLPRGTSGSPIINAQGDVLGLYGNGLKSNDVYISSIAQGNVEKSRPEMPLAVQGGKWTSKGSITVLDMHPGSGKTHRVLPELIRECIDKRLRTVVLAPTRVVLKEMERALQGKRVKFHSAAVDNASSSSGAIVDVMCHATYVNRRLLPQGRQNWEVAIMDEAHWTDPHSIAARGHLYSLAKENRCALVLMTATPPGKSEAFPESKGAIVSEEKPIPEGEWRDGFDWITEFEGRTAWFVPSIAKGGAIARTLRQKGKSVICLNSKTFDKDYGRVHEEKPDFVVTTDISEMGANLDVNRVIDGRTNIKPEEIDGKVELIGTRRVTTASAAQRRGRVGRHEGRTDLYVYSGQCDDDDSSLVQWKEAQILLDNITTVRGPVATFYGPEQGKMLEVAGHFRLTEEKRKHFRHLLTNCDFTPWLAWHVAANTACVTDRKWTWEGPDENAIDGPGGELVTFRSPNGAERKLKPIWKDSRMFREGRDVADFIQYASGRRSAVDILTGLGGVPDLLRLRCTAAWDVVYTLLNETPGSRAMKMAERDAPEAMLTLLEVAVLGIATLGVVWCFIVRTSVSRMVLGTLVLAVALILLWLGGMDYGTMAGVALIFYLLLTVLQPEPGKQRSGEDNRLAFLLIGLGSVVGLVAANELGYLEQTKTDISGLFRREDQGGMVWDAWTNIDIQPARSWGTYVLIVSLFTPYMLHQLQTKIQRLVNSSVAAGTQAMRDLGGGTPFFGVAGHVVALGVTSLVGATPTSLALGVALAALHLAVVTSGLEAELTQRAHRAFFSAMVKNPMVDGEIINPIPDGDPKPALYERKMSLFLAIGLCIAAVALNRTAAAMTEAGAVAVAALGQLLRPEEESWWTMPMACGMAGLVRGSLWGLLPVLHRIWLRTQGARRGGAEGSTLGDIWKQRLNSCTKEEFFAYRRTGVMETNRDQARELLRRGETNMGLAVSRGCAKLAWLEERGYATLKGEVVDLGCGRGGWSYYAASRPSVMAVRAYTIGGKGHEAPRLVTSLGWNLIKFRSGMDVFSMATTRADTILCDIGESSPDPEKEGARSRRVILLMEQWKARNPDAAAVFKVLAPYRPEVLEALHRFQLQWGGGLVRVPFSRNSTHEMYYSTAVTGNLVNSVNVLSRKLLARFGETRGPIQVPEIDLGTGTRCVTLAEDKVKPRDVAERIGALREQYSESWHEDKEHPYRTWQYWGSYRTPATGSAASLINGVVKLLSWPWNAREDVTRMAMTDTTAFGQQRVFKEKVDTKAQEPQPGTRVIMRAVSDWLLEHLSRRAKVRMCTKDEFIAKVRSNAALGAWSDEQNKWSSAKEAVEDPEFWKLVDEERSRHLKGQCRHCVYNMMGKREKKLGEFGVAKGSRAIWYMWLGSRFLEFEVLGFLNEEHWASREVSGAGVEGTSLNYLGWLLRELGMKDGGKLYADDTAGWDTRITNADLEDEEQILRYMEGEHHVLAKTILEKAYHAKVVKVARPSPQGGCVMDVITRRDQRGSGQVVTYALNTITNMKVQLIRMMEGEGVIGPADSQDPRLKRVETWLKEHGVERLGRMLVSGDDCVVKPIDDRFGKALYFLNDMAKVRKDVGEWEPSMGFTEWEEVPFCSHHFHELVMKDGRSLIVPCRDQDELVGRARVSPGCGWSVRETACLSKAYGQMWLLNYFHRRDLRTLGFAICSAVPVSWVPMGRTTWSIHASGEWMTTEDMLRIWNKVWILDNPHMEDKQTVDEWRDIPYLPKTQDLVCSSLVGRKERAEWAKNIWGSVEKVRKLIGPEDYRDYLSSMDRHDLHWELKLESSII.

Residues 1–29 form a disordered region; it reads MMTTSKGKGGGPPRRKLKVTANKSRPATS. Residues 1–96 are Cytoplasmic-facing; sequence MMTTSKGKGG…LHMRGRRRSG (96 aa). Residues 95-115 constitute a propeptide, ER anchor for the capsid protein C, removed in mature form by serine protease NS3; sequence SGVDWTWIFLTMALMTMAMAT. A helical membrane pass occupies residues 97–117; that stretch reads VDWTWIFLTMALMTMAMATTI. The Extracellular portion of the chain corresponds to 118 to 243; it reads HRDREGYMVM…RVEGWMWKNK (126 aa). N142 carries an N-linked (GlcNAc...) asparagine; by host glycan. Residues 244–260 form a helical membrane-spanning segment; it reads LLTAAIVALAWLMVDSW. M261 is a topological domain (cytoplasmic). A helical membrane pass occupies residues 262–278; that stretch reads ARVTVILLALSLGPVYA. The Extracellular portion of the chain corresponds to 279–726; sequence TRCTHLENRD…HTVLGGAFNT (448 aa). 6 disulfide bridges follow: C281–C308, C338–C394, C338–C399, C352–C383, C370–C394, and C370–C399. A fusion peptide region spans residues 376 to 389; it reads DRGWGNHCGFFGKG. An N-linked (GlcNAc...) asparagine; by host glycan is attached at N432. Disulfide bonds link C464-C568 and C585-C617. The chain crosses the membrane as a helical span at residues 727-747; it reads LFGGVGFIPKMLLGVALVWLG. Residues 748 to 754 are Cytoplasmic-facing; the sequence is LNARNPT. Residues 755–775 form a helical membrane-spanning segment; the sequence is MSMTFLAVGALTLMMTMGVGA. The Extracellular portion of the chain corresponds to 776 to 1187; the sequence is DYGCAIDPER…LVRVEEIVRY (412 aa). 6 disulfides stabilise this stretch: C779/C790, C830/C920, C955/C1000, C1057/C1106, C1068/C1090, and C1089/C1093. N860, N983, and N999 each carry an N-linked (GlcNAc...) asparagine; by host glycan. Residues 1188–1208 form a helical membrane-spanning segment; the sequence is VIAVGVTFHLELGPETMVLVM. At 1209–1233 the chain is on the cytoplasmic side; the sequence is LQAVFNMRTCYLMGFLVKRVITTRE. A helical transmembrane segment spans residues 1234–1253; sequence VVTVYFLLLVLEMGIPEMNF. A topological domain (lumenal) is located at residue G1254. A helical membrane pass occupies residues 1255 to 1275; that stretch reads HLWEWADALAMGLLIIKASAM. Residues 1276-1292 are Cytoplasmic-facing; that stretch reads EDRRGLGFLLAGLMTQR. A helical transmembrane segment spans residues 1293–1313; it reads HLVAVHHGLMVFLTVALAVVG. The Lumenal segment spans residues 1314–1327; it reads RNIYNGQKERKGLC. The helical transmembrane segment at 1328 to 1348 threads the bilayer; sequence FTVPLASLLGGSGSGLRMLAL. Residues 1349-1359 are Cytoplasmic-facing; sequence WECLGGRGRRS. A helical transmembrane segment spans residues 1360–1378; it reads LSEPLTVVGVMLAMASGLL. Topologically, residues 1379-1382 are lumenal; it reads RHSS. A helical transmembrane segment spans residues 1383-1403; sequence QEALLALSAGSFLILMLILGT. The Cytoplasmic segment spans residues 1404 to 1452; sequence RRLQLTAEWAGVVEWNPELVNEGGEVSLKVRQDAMGNLHLTEVEREERR. The interval 1410-1449 is interacts with and activates NS3 protease; that stretch reads AEWAGVVEWNPELVNEGGEVSLKVRQDAMGNLHLTEVERE. An intramembrane region (helical) is located at residues 1453–1473; the sequence is LALWLVFGLLASAYHWSGILV. At 1474–2163 the chain is on the cytoplasmic side; sequence TMGAWTVYEL…AERDAPEAML (690 aa). Positions 1490–1669 constitute a Peptidase S7 domain; it reads TDLVFSGQLP…NVEKSRPEMP (180 aa). Residues H1543, D1567, and S1627 each act as charge relay system; for serine protease NS3 activity in the active site. The 158-residue stretch at 1675–1832 folds into the Helicase ATP-binding domain; it reads GKWTSKGSIT…ESKGAIVSEE (158 aa). Position 1688–1695 (1688–1695) interacts with ATP; the sequence is MHPGSGKT. The DEAH box motif lies at 1780–1783; that stretch reads DEAH. Residues 1842–2001 enclose the Helicase C-terminal domain; it reads DGFDWITEFE…TVRGPVATFY (160 aa). K1884 carries the post-translational modification N6-acetyllysine; by host. Residues 2164-2184 form a helical membrane-spanning segment; the sequence is TLLEVAVLGIATLGVVWCFIV. At 2185–2190 the chain is on the lumenal side; the sequence is RTSVSR. The segment at residues 2191–2210 is an intramembrane region (helical); sequence MVLGTLVLAVALILLWLGGM. A topological domain (lumenal) is located at residue D2211. Residues 2212–2232 form a helical membrane-spanning segment; it reads YGTMAGVALIFYLLLTVLQPE. Over 2233-2243 the chain is Cytoplasmic; it reads PGKQRSGEDNR. Residues 2244 to 2264 form a helical membrane-spanning segment; it reads LAFLLIGLGSVVGLVAANELG. At 2265–2300 the chain is on the lumenal side; sequence YLEQTKTDISGLFRREDQGGMVWDAWTNIDIQPARS. Positions 2301–2321 form an intramembrane region, helical; the sequence is WGTYVLIVSLFTPYMLHQLQT. Over 2322–2344 the chain is Lumenal; that stretch reads KIQRLVNSSVAAGTQAMRDLGGG. Positions 2345–2365 form an intramembrane region, helical; it reads TPFFGVAGHVVALGVTSLVGA. The Lumenal segment spans residues 2366–2369; sequence TPTS. The helical transmembrane segment at 2370-2390 threads the bilayer; it reads LALGVALAALHLAVVTSGLEA. At 2391–2433 the chain is on the cytoplasmic side; it reads ELTQRAHRAFFSAMVKNPMVDGEIINPIPDGDPKPALYERKMS. The helical transmembrane segment at 2434–2454 threads the bilayer; sequence LFLAIGLCIAAVALNRTAAAM. Over 2455-2479 the chain is Lumenal; it reads TEAGAVAVAALGQLLRPEEESWWTM. The chain crosses the membrane as a helical span at residues 2480-2500; that stretch reads PMACGMAGLVRGSLWGLLPVL. The Cytoplasmic segment spans residues 2501–3415; that stretch reads HRIWLRTQGA…WELKLESSII (915 aa). The 265-residue stretch at 2513-2777 folds into the mRNA cap 0-1 NS5-type MT domain; it reads GGAEGSTLGD…EIDLGTGTRC (265 aa). S2568 contacts S-adenosyl-L-methionine. At S2568 the chain carries Phosphoserine. Catalysis depends on K2573, which acts as the For 2'-O-MTase activity. S-adenosyl-L-methionine contacts are provided by G2598, W2599, T2616, I2617, D2643, and V2644. D2658 (for 2'-O-MTase activity) is an active-site residue. Residue I2659 participates in S-adenosyl-L-methionine binding. Residues K2695 and E2731 each act as for 2'-O-MTase activity in the active site. Positions 2731-2735 are interaction with host SCRIB; it reads EMYYS. Residue Y2733 coordinates S-adenosyl-L-methionine. Positions 2951, 2955, 2960, and 2963 each coordinate Zn(2+). One can recognise a RdRp catalytic domain in the interval 3041 to 3190; sequence GKLYADDTAG…KPIDDRFGKA (150 aa). 3 residues coordinate Zn(2+): H3225, C3241, and C3360.

This sequence in the N-terminal section; belongs to the class I-like SAM-binding methyltransferase superfamily. mRNA cap 0-1 NS5-type methyltransferase family. As to quaternary structure, homodimer. Interacts (via N-terminus) with host EXOC1 (via C-terminus); this interaction results in EXOC1 degradation through the proteasome degradation pathway. Forms heterodimers with envelope protein E in the endoplasmic reticulum and Golgi. In terms of assembly, homodimer; in the endoplasmic reticulum and Golgi. As to quaternary structure, forms homodimers as well as homohexamers. NS1 may interact with NS4A. Forms a heterodimer with serine protease NS3. May form homooligomers. In terms of assembly, forms a heterodimer with NS2B. Interacts with NS4B. Interacts with unphosphorylated RNA-directed RNA polymerase NS5; this interaction stimulates RNA-directed RNA polymerase NS5 guanylyltransferase activity. As to quaternary structure, interacts with serine protease NS3. Interacts with host STAT2; this interaction inhibits the phosphorylation of the latter, and, when all viral proteins are present (polyprotein), targets STAT2 for degradation. Specific enzymatic cleavages in vivo yield mature proteins. Cleavages in the lumen of endoplasmic reticulum are performed by host signal peptidase, whereas cleavages in the cytoplasmic side are performed by serine protease NS3. Signal cleavage at the 2K-4B site requires a prior NS3 protease-mediated cleavage at the 4A-2K site. In terms of processing, cleaved in post-Golgi vesicles by a host furin, releasing the mature small envelope protein M, and peptide pr. This cleavage is incomplete as up to 30% of viral particles still carry uncleaved prM. Post-translationally, N-glycosylated. N-glycosylated. The excreted form is glycosylated and this is required for efficient secretion of the protein from infected cells. In terms of processing, acetylated by host KAT5. Acetylation modulates NS3 RNA-binding and unwinding activities and plays an important positive role for viral replication. Post-translationally, phosphorylated on serines residues. This phosphorylation may trigger NS5 nuclear localization.

It localises to the virion. Its subcellular location is the host nucleus. It is found in the host cytoplasm. The protein resides in the host perinuclear region. The protein localises to the secreted. It localises to the virion membrane. Its subcellular location is the host endoplasmic reticulum membrane. It catalyses the reaction Selective hydrolysis of -Xaa-Xaa-|-Yaa- bonds in which each of the Xaa can be either Arg or Lys and Yaa can be either Ser or Ala.. The catalysed reaction is RNA(n) + a ribonucleoside 5'-triphosphate = RNA(n+1) + diphosphate. The enzyme catalyses a ribonucleoside 5'-triphosphate + H2O = a ribonucleoside 5'-diphosphate + phosphate + H(+). It carries out the reaction ATP + H2O = ADP + phosphate + H(+). It catalyses the reaction a 5'-end (5'-triphosphoguanosine)-ribonucleoside in mRNA + S-adenosyl-L-methionine = a 5'-end (N(7)-methyl 5'-triphosphoguanosine)-ribonucleoside in mRNA + S-adenosyl-L-homocysteine. The catalysed reaction is a 5'-end (N(7)-methyl 5'-triphosphoguanosine)-ribonucleoside in mRNA + S-adenosyl-L-methionine = a 5'-end (N(7)-methyl 5'-triphosphoguanosine)-(2'-O-methyl-ribonucleoside) in mRNA + S-adenosyl-L-homocysteine + H(+). In terms of biological role, plays a role in virus budding by binding to the cell membrane and gathering the viral RNA into a nucleocapsid that forms the core of a mature virus particle. During virus entry, may induce genome penetration into the host cytoplasm after hemifusion induced by the surface proteins. Can migrate to the cell nucleus where it modulates host functions. Its function is as follows. Inhibits RNA silencing by interfering with host Dicer. Prevents premature fusion activity of envelope proteins in trans-Golgi by binding to envelope protein E at pH6.0. After virion release in extracellular space, gets dissociated from E dimers. Functionally, acts as a chaperone for envelope protein E during intracellular virion assembly by masking and inactivating envelope protein E fusion peptide. prM is the only viral peptide matured by host furin in the trans-Golgi network probably to avoid catastrophic activation of the viral fusion activity in acidic Golgi compartment prior to virion release. prM-E cleavage is inefficient, and many virions are only partially matured. These uncleaved prM would play a role in immune evasion. In terms of biological role, may play a role in virus budding. Exerts cytotoxic effects by activating a mitochondrial apoptotic pathway through M ectodomain. May display a viroporin activity. Its function is as follows. Binds to host cell surface receptor and mediates fusion between viral and cellular membranes. Envelope protein is synthesized in the endoplasmic reticulum in the form of heterodimer with protein prM. They play a role in virion budding in the ER, and the newly formed immature particle is covered with 60 spikes composed of heterodimer between precursor prM and envelope protein E. The virion is transported to the Golgi apparatus where the low pH causes dissociation of PrM-E heterodimers and formation of E homodimers. prM-E cleavage is inefficient, and many virions are only partially matured. These uncleaved prM would play a role in immune evasion. Involved in immune evasion, pathogenesis and viral replication. Once cleaved off the polyprotein, is targeted to three destinations: the viral replication cycle, the plasma membrane and the extracellular compartment. Essential for viral replication. Required for formation of the replication complex and recruitment of other non-structural proteins to the ER-derived membrane structures. Excreted as a hexameric lipoparticle that plays a role against host immune response. Antagonizing the complement function. Binds to the host macrophages and dendritic cells. Inhibits signal transduction originating from Toll-like receptor 3 (TLR3). Functionally, component of the viral RNA replication complex that functions in virion assembly and antagonizes the host immune response. In terms of biological role, required cofactor for the serine protease function of NS3. May have membrane-destabilizing activity and form viroporins. Its function is as follows. Displays three enzymatic activities: serine protease, NTPase and RNA helicase. NS3 serine protease, in association with NS2B, performs its autocleavage and cleaves the polyprotein at dibasic sites in the cytoplasm: C-prM, NS2A-NS2B, NS2B-NS3, NS3-NS4A, NS4A-2K and NS4B-NS5. NS3 RNA helicase binds RNA and unwinds dsRNA in the 3' to 5' direction. Regulates the ATPase activity of the NS3 helicase activity. NS4A allows NS3 helicase to conserve energy during unwinding. Functionally, functions as a signal peptide for NS4B and is required for the interferon antagonism activity of the latter. In terms of biological role, induces the formation of ER-derived membrane vesicles where the viral replication takes place. Inhibits interferon (IFN)-induced host STAT1 phosphorylation and nuclear translocation, thereby preventing the establishment of cellular antiviral state by blocking the IFN-alpha/beta pathway. Inhibits STAT2 translocation in the nucleus after IFN-alpha treatment. Its function is as follows. Replicates the viral (+) and (-) RNA genome, and performs the capping of genomes in the cytoplasm. NS5 methylates viral RNA cap at guanine N-7 and ribose 2'-O positions. Besides its role in RNA genome replication, also prevents the establishment of cellular antiviral state by blocking the interferon-alpha/beta (IFN-alpha/beta) signaling pathway. Inhibits host TYK2 and STAT2 phosphorylation, thereby preventing activation of JAK-STAT signaling pathway. This chain is Genome polyprotein, found in Tick-borne powassan virus (strain LB) (POWV).